The chain runs to 618 residues: Nuclear RNA export factor 1 (618 aa).

Residues Met1 to Val15 show a composition bias toward basic and acidic residues. The tract at residues Met1–Gly113 is disordered. Ala2 carries the N-acetylalanine modification. Residues Ala2–Ala59 form a minor non-specific RNA-binding region. The interval Ala2–Asn117 is RNA-binding (RBD). An interaction with ALYREF/THOC4 and LUZP4 region spans residues Ala2–Tyr197. A compositionally biased stretch (basic residues) spans Gln19–Phe28. Arg41 is modified (asymmetric dimethylarginine; alternate). Arg41 carries the omega-N-methylarginine; alternate modification. Residues Met60–Asn117 form a major non-specific RNA-binding region. The segment at Met60–Asn117 is RNA binding. The short motif at Gly66–Arg99 is the Nuclear localization signal element. Positions Arg80–Ala102 are enriched in basic and acidic residues. Residues Gly82–Thr109 carry the Nuclear export signal motif. The RRM domain occupies Trp118–Tyr197. Tyr125 is subject to 3'-nitrotyrosine. 4 LRR repeats span residues Glu265 to Pro290, Asn291 to Leu314, Lys315 to Glu342, and Arg343 to Pro370. One can recognise an NTF2 domain in the interval Leu385–Val535. The 55-residue stretch at Pro564–Lys618 folds into the TAP-C domain.

This sequence belongs to the NXF family. In terms of assembly, heterodimer (via NTF2 domain) with NXT1. The formation of NXF1-NXT1 heterodimers is required for the NXF1-mediated nuclear mRNA export. Forms a complex with RANBP2/NUP358, NXT1 and RANGAP1. Associates with the exon junction complex (EJC). Associates with the transcription/export (TREX) complex. Found in a mRNA complex with UPF3A and UPF3B. Found in a post-splicing complex with RBM8A, UPF1, UPF2, UPF3A, UPF3B and RNPS1. Interacts (via N-terminus) with DHX9 (via N-terminus); this interaction is direct and negatively regulates NXF1-mediated nuclear export of constitutive transport element (CTE)-containing cellular mRNAs. Interacts with FYTTD1/UIF. Interacts with EIF4A3. Interacts with NUP42. Interacts with ALYREF/THOC4. Interacts with CHTOP. Interacts with FRG1 (via N-terminus). Interacts with LUZP4. Interacts with FMR1; the interaction occurs in a mRNA-dependent and polyribosomes-independent manner in the nucleus. Interacts with CPSF6 (via N-terminus); this interaction is direct. Interacts with RBM15. Interacts with RBM15B. Interacts with MCM3AP; this interaction is not mediated by RNA. Interacts with DDX3X (via C-terminus); this interaction may be partly involved in DDX3X nuclear export and in NXF1 localization to stress granules. Interacts with PABPC1/PABP1. In terms of tissue distribution, expressed ubiquitously.

It is found in the nucleus. The protein localises to the nucleoplasm. It localises to the nucleus speckle. The protein resides in the cytoplasm. Its subcellular location is the nuclear pore complex. It is found in the nucleus envelope. The protein localises to the stress granule. Involved in the nuclear export of mRNA species bearing retroviral constitutive transport elements (CTE) and in the export of mRNA from the nucleus to the cytoplasm (TAP/NFX1 pathway). The NXF1-NXT1 heterodimer is involved in the export of HSP70 mRNA in conjunction with ALYREF/THOC4 and THOC5 components of the TREX complex. ALYREF/THOC4-bound mRNA is thought to be transferred to the NXF1-NXT1 heterodimer for export. Also involved in nuclear export of m6A-containing mRNAs: interaction between SRSF3 and YTHDC1 facilitates m6A-containing mRNA-binding to both SRSF3 and NXF1, promoting mRNA nuclear export. This is Nuclear RNA export factor 1 (Nxf1) from Mus musculus (Mouse).